The sequence spans 94 residues: Potassium channel protein kcv (94 aa).

Residues 14–34 (FMIHLFILAMFVMIYKFFPGG) form a helical membrane-spanning segment. Residue Asn38 is glycosylated (N-linked (GlcNAc...) asparagine; by host). A helical transmembrane segment spans residues 74 to 94 (TGAKLCTIAHIVTVFFIVLTL).

This sequence belongs to the two pore domain potassium channel (TC 1.A.1.12) family.

The protein localises to the membrane. Functionally, potassium-selective channel essential in the virus replication cycle. May be involved in preventing multiple infections (Potential). In Paramecium bursaria Chlorella virus 1 (PBCV-1), this protein is Potassium channel protein kcv (A250R).